Here is a 478-residue protein sequence, read N- to C-terminus: Aspartate ammonia-lyase (478 aa).

Positions 109, 148, 149, 150, and 195 each coordinate L-aspartate. The tract at residues 326-335 is SS loop; the sequence is GSSIMPGKVN. Serine 327 functions as the Proton acceptor in the catalytic mechanism. Positions 328 and 333 each coordinate L-aspartate.

It belongs to the class-II fumarase/aspartase family. Aspartase subfamily. Homotetramer.

It catalyses the reaction L-aspartate = fumarate + NH4(+). In terms of biological role, catalyzes the reversible conversion of L-aspartate to fumarate and ammonia. This is Aspartate ammonia-lyase from Pseudomonas fluorescens.